A 341-amino-acid chain; its full sequence is Syntaxin-122 (341 aa).

Methionine 1 is subject to N-acetylmethionine. Disordered stretches follow at residues 1–22 (MNDLLSGSFKTSVADGSSPPHS) and 111–137 (LDRANEVNRSLPESGPGSSSDRQRTSV). At 1 to 284 (MNDLLSGSFK…ARFYQKNTRK (284 aa)) the chain is on the cytoplasmic side. Polar residues-rich tracts occupy residues 8–21 (SFKTSVADGSSPPH) and 126–137 (PGSSSDRQRTSV). The stretch at 64–185 (CHNLRSSNEQ…GEYPDEATLE (122 aa)) forms a coiled coil. A t-SNARE coiled-coil homology domain is found at 213 to 275 (INEIQERHDA…RSGADRLVKA (63 aa)). A helical; Anchor for type IV membrane protein membrane pass occupies residues 285 to 305 (WTCFAILLLLIIVVLIVVFTV). Topologically, residues 306-341 (KPWESNGGGGGGAPRQATPVQAQPPPPPAVNRRLLR) are vesicular. Residues 312-341 (GGGGGGAPRQATPVQAQPPPPPAVNRRLLR) form a disordered region.

It belongs to the syntaxin family. Part of the t-SNARE complex.

The protein resides in the membrane. Vesicle trafficking protein that functions in the secretory pathway. In Arabidopsis thaliana (Mouse-ear cress), this protein is Syntaxin-122 (SYP122).